The chain runs to 252 residues: Phosphate import ATP-binding protein PstB (252 aa).

The ABC transporter domain maps to 5–247 (MRGQDVKVFY…PKEQRTQDYI (243 aa)). ATP is bound at residue 37 to 44 (GPSGCGKS).

This sequence belongs to the ABC transporter superfamily. Phosphate importer (TC 3.A.1.7) family. The complex is composed of two ATP-binding proteins (PstB), two transmembrane proteins (PstC and PstA) and a solute-binding protein (PstS).

Its subcellular location is the cell inner membrane. The enzyme catalyses phosphate(out) + ATP + H2O = ADP + 2 phosphate(in) + H(+). Functionally, part of the ABC transporter complex PstSACB involved in phosphate import. Responsible for energy coupling to the transport system. In Bartonella quintana (strain Toulouse) (Rochalimaea quintana), this protein is Phosphate import ATP-binding protein PstB.